A 207-amino-acid chain; its full sequence is Large ribosomal subunit protein uL4 (207 aa).

The protein belongs to the universal ribosomal protein uL4 family. Part of the 50S ribosomal subunit.

One of the primary rRNA binding proteins, this protein initially binds near the 5'-end of the 23S rRNA. It is important during the early stages of 50S assembly. It makes multiple contacts with different domains of the 23S rRNA in the assembled 50S subunit and ribosome. Its function is as follows. Forms part of the polypeptide exit tunnel. The protein is Large ribosomal subunit protein uL4 of Rickettsia rickettsii (strain Iowa).